The primary structure comprises 2467 residues: Transcription factor TFIIIB component B'' homolog (2467 aa).

Disordered stretches follow at residues 1–145 (MFRR…RYRI) and 159–243 (LRKE…VDDG). Residues 1–301 (MFRRARLSVK…TYSSFRKNYY (301 aa)) form an interaction with ZBTB43 region. The span at 81–92 (AAESSTLSSASS) shows a compositional bias: low complexity. Over residues 99–118 (SSTSSLVQPSGSAPSQSRPL) the composition is skewed to polar residues. Basic and acidic residues-rich tracts occupy residues 133 to 144 (AKEKQPCSDRYR) and 177 to 186 (RPPDRSKMTM). The stretch at 144-177 (RIYKARKLREMLKEELRKEKKQWKNKFSTNESQR) forms a coiled coil. Residues 231–242 (NDNEDVEEEVDD) are compositionally biased toward acidic residues. Residues 297-347 (RKNYYSKPWSNKETDMFFLAISMVGTDFSMIGQLFPHRARIEIKNKFKREE) form the Myb-like domain. The segment at 357-472 (AFQEKRPFDF…QEKKRRRNQG (116 aa)) is required for phosphorylation by CSNK2A1. Disordered stretches follow at residues 380-513 (EEKR…ECNK), 576-720 (SADM…VKAA), 748-844 (PPQT…PATW), 866-893 (LTAT…NAEM), 971-1200 (LQEN…SSKI), 1231-1270 (LGRH…VKPA), 1318-1388 (DSDQ…LVPI), 1409-1448 (LPVR…PELQ), 1527-1561 (KAKP…EDHL), 1592-1706 (IHSE…RASK), 1902-1926 (IVSK…LPTR), 1977-2014 (IQRE…QCVG), 2058-2083 (LDSG…SDVP), 2179-2206 (LVVQ…DLTS), 2260-2290 (GIFP…SGSL), and 2304-2449 (LPQS…EEVT). The stretch at 458–487 (EQDQNQEKKRRRNQGEANKQEATNLLERVL) forms a coiled coil. Residues 649–660 (AAEKNHMEKETM) are compositionally biased toward basic and acidic residues. Basic residues predominate over residues 809-824 (RFQKPKPNTGRRRRRI). Composition is skewed to basic and acidic residues over residues 873–884 (KDSESDVKDSGR), 992–1002 (TGKDLAMKEST), 1009–1041 (TEER…RGEM), 1089–1098 (EGKELNLRET), 1112–1130 (EKTD…ERES), and 1150–1170 (DLGK…EEHS). 4 stretches are compositionally biased toward polar residues: residues 1180–1200 (LSSS…SSKI), 1251–1265 (DTNL…QQPL), 1318–1330 (DSDQ…QHNV), and 1364–1382 (PPNS…NQEN). 3 stretches are compositionally biased toward basic and acidic residues: residues 1429-1448 (QIVE…PELQ), 1536-1561 (RRKD…EDHL), and 1592-1603 (IHSEESGSDRND). Polar residues-rich tracts occupy residues 1621–1642 (EQPT…SSCP) and 1650–1665 (YPKT…SSAS). The span at 1688–1697 (RGSKRIRGKT) shows a compositional bias: basic residues. Composition is skewed to basic and acidic residues over residues 1902–1913 (IVSKEQSNRDAA), 1977–1996 (IQRE…DKSH), and 2068–2078 (AAKEALKETPK). The segment covering 2185 to 2199 (PSLSPSRSGSSEKPP) has biased composition (low complexity). Polar residues-rich tracts occupy residues 2262 to 2273 (FPTSESTHATSK), 2319 to 2334 (PASN…SSSK), and 2414 to 2429 (TAGS…SSDQ).

Component of TFIIIB complex. The TFIIIB complex has two activities, alpha and beta. The TFIIIB-alpha and TFIIIB-beta activities are required for transcription of genes with TFIIIC-bound internal promoters and PSE transcription factor-bound external promoters, respectively. The TFIIIB-alpha activity complex is composed of TBP, BDP1, and a complex containing both BRF2 and at least four stably associated proteins; YY1 facilitates the formation of TFIIIB-alpha activity complex. The TFIIIB-beta activity complex is composed of TBP, BDP1, and BRF1. Interacts with BRF1; this interaction diminishes during mitosis resulting in the release of BDP1 from chromosomal templates. Component of TFIIIC complex. The TFIIIC complex has two activities, C1 and C2. The TFIIIC2 activity complex is only required for transcription of the 'classical' pol III genes whereas the TFIIIC1 activity complex is required for transcription of all pol III genes. The TFIIIC1 activity complex is composed at least of BDP1. Interacts with ZBTB43. In terms of processing, phosphorylated by CSNK2A1 during mitosis, resulting in its release from chromatin and suppression of polymerase III transcription. As to expression, expressed in the cochlea, particularly in the spiral ligament, the capillaries of the stria vascularis and the basilar membrane.

It localises to the nucleus. General activator of RNA polymerase III transcription. Requires for transcription from all three types of polymerase III promoters. Requires for transcription of genes with internal promoter elements and with promoter elements upstream of the initiation site. In Mus musculus (Mouse), this protein is Transcription factor TFIIIB component B'' homolog (Bdp1).